An 88-amino-acid polypeptide reads, in one-letter code: Small ribosomal subunit protein uS15 (88 aa).

This sequence belongs to the universal ribosomal protein uS15 family. Part of the 30S ribosomal subunit. Forms a bridge to the 50S subunit in the 70S ribosome, contacting the 23S rRNA.

Its function is as follows. One of the primary rRNA binding proteins, it binds directly to 16S rRNA where it helps nucleate assembly of the platform of the 30S subunit by binding and bridging several RNA helices of the 16S rRNA. Forms an intersubunit bridge (bridge B4) with the 23S rRNA of the 50S subunit in the ribosome. The polypeptide is Small ribosomal subunit protein uS15 (Polaromonas sp. (strain JS666 / ATCC BAA-500)).